The primary structure comprises 334 residues: F-box protein AUF1 (334 aa).

The F-box domain occupies 1-49; that stretch reads MDAFDAIPDPVVIDILNRVGDVKTLIRCRSVSKRFNSLATQSESLLLQL.

As to quaternary structure, part of a SCF (ASK-cullin-F-box) protein ligase complex. Interacts with SKP1A/ASK1, SKP1B/ASK2, ASK11 and ASK13.

It is found in the nucleus. Its pathway is protein modification; protein ubiquitination. Its function is as follows. Component of SCF(ASK-cullin-F-box) E3 ubiquitin ligase complexes, which may mediate the ubiquitination and subsequent proteasomal degradation of target proteins. Involved in the control of basipetal and acropetal auxin transport by promoting the distribution and expression of the auxin transporter PIN2. Promotes cytokinin-mediated cell expansion in the root elongation and differentiation zone, without affecting root cell division. The sequence is that of F-box protein AUF1 from Arabidopsis thaliana (Mouse-ear cress).